Reading from the N-terminus, the 156-residue chain is Small ribosomal subunit protein uS7 (156 aa).

The protein belongs to the universal ribosomal protein uS7 family. As to quaternary structure, part of the 30S ribosomal subunit. Contacts proteins S9 and S11.

One of the primary rRNA binding proteins, it binds directly to 16S rRNA where it nucleates assembly of the head domain of the 30S subunit. Is located at the subunit interface close to the decoding center, probably blocks exit of the E-site tRNA. This is Small ribosomal subunit protein uS7 from Brucella melitensis biotype 1 (strain ATCC 23456 / CCUG 17765 / NCTC 10094 / 16M).